We begin with the raw amino-acid sequence, 1093 residues long: MTVNGHHTNGVNGANGTNGHANGSNGINDTKAVKEIVPFVKPQVNFASAQRLEGCIHSLPELVDFNSLNNQHHTFCVQAKSSEPFDTITHGEFKVAVSKCAAWLKENLPIRPSSDDKALTKMAPVALFMESDIGLVIHEFALMSIGVPPLVLSPRLSPVAINALLEATGAASFIVSPRMSEPLKGALAALAAKGVSTHIGNPYKAYYQPGADPKSVAPFEVPQNPEDVILLLHSSGTTGLPKPIPTTHRQLLFAVNCHKFDTEEQAQSLNLSTLPLFHGFGLVAPGLSMSAGKPTLYPASDGIPNAKSIVDLINKTNAKSMMTVPFLLDDITNLPNEEGIKALVHMDFVGTGGAALGAGIGDRLAKGGVKLLNFYGTTETGPLSLTFAPTDNYDWKYFRLRTDCEYKIDELEPRDGERRFRLTVYPYGSEGFEISDQLIRNEQYPETDFAAVGRDDDVIVLATGEKANPLILETKLTEAPMVKAAIAFGENQFNLGVIVEPAEPLTPDTESAFRESIWPIITAACDQMDAFSRIPSPDAVVLVPAGVVIPRTDKGSIARKETYALFDKQIKGVYEQLLKAAADAVEPLDLDNLEQNLKSLIQEHLHIQAPASDWGVEDSLFDIGVDSLQVLQLRRILVTAASKTEAFKDTDCEKMIPPEFVYMNPSIREIAAALTKGSDGGDVSLEDAAKEVVELAETYSLKGVSAQEKAPSSSEGAFVMLTGATGSLGSHVAADLARRDNVAKVVCLVRKDKGTNQPPMPGGNPFDKKILKARGIQLTDEQFGKLATLEVDPTADKLGLIPMAYGMMQAKVTHVIHAAWPMNYLIRLRNFQYQFKFLRNLLEFASQGPAPTKKRFVFISSIATVARIGLAQPGSISEAPVSPSDSACGIGYADGKLVCEKIMEKAAQDYGGQLDVTSVRCGQMTGSKKTGVWNSNEQIPMLLKSAQGLGSLPQLSGELSWIPVDDAASTVSEIAFSDGSMPIVQHLENPIRQSWDAMLQSFGRELGLPAGKVPFGEWLDQVAAADGDDETFPVKKLTFFFKSFFQSVACGQVVLDTTVSRGQSKTLNAMTAVGDETVKAYADYWKSTGYLSK.

The segment covering 1–26 has biased composition (low complexity); the sequence is MTVNGHHTNGVNGANGTNGHANGSNG. Residues 1–27 are disordered; the sequence is MTVNGHHTNGVNGANGTNGHANGSNGI. The interval 35 to 392 is adenylation (A) domain; the sequence is EIVPFVKPQV…LSLTFAPTDN (358 aa). The Carrier domain occupies 591-678; it reads DNLEQNLKSL…EIAAALTKGS (88 aa). Position 627 is an O-(pantetheine 4'-phosphoryl)serine (Ser-627). Residues 721-971 are thioester reductase (TR) domain; the sequence is LTGATGSLGS…IPVDDAASTV (251 aa).

This sequence belongs to the NRP synthetase family.

It catalyses the reaction ilicicolinate B + AH2 + ATP = ilicicolin B + A + AMP + diphosphate. It participates in secondary metabolite biosynthesis; terpenoid biosynthesis. Functionally, non-canonical non-ribosomal peptide synthetase; part of the asc-1 gene cluster that mediates the biosynthesis of both ascochlorin and ascofuranone, a strong inhibitor of cyanide-insensitive alternative oxidases and a promising drug candidate against African trypanosomiasis. The first step in the pathway is performed by the non-reducing polyketide synthase ascC that produces orsellinic acid by condensing acetyl-CoA with 3 malonyl-CoA units. Orsellinic acid is then prenylated by the prenyltransferase ascA to yield ilicicolinic acid B. Ilicicolinic acid B is further reduced to ilicicolin B by the reductase ascB. The halogenase ascD then chlorinates ilicicolin B to produce ilicicolin A which is converted to ilicicolin A epoxide by the cytochrome P450 monooxygenase ascE that catalyzes stereoselective epoxidation of the terminal double bond of the prenyl group. Ilicicolin A epoxide is the last common precursor for the biosynthesis of ascofuranone and ascochlorin. The terpene cyclase ascF produces a monocyclic terpene, and the cyclization reaction is proposed to be initiated by protonation of the terminal epoxide of ilicicolin A epoxide to generate a monocyclic tertiarycation, which is followed by a series of hydride and methyl shifts with abstraction of proton, leading to the formation of the (14S,15R,19R)-trimethylcyclohexanone ring structure of ilicicolin C, which is finally reduced to ascochlorin by the dehydrogenase ascG. On the other hand, ilicicolin A epoxide is hydroxylated by the cytochrome P450 monooxygenase ascH, and the resultant product is cyclized by the terpene cyclase ascI to ascofuranol via protonation-initiated epoxide ring opening, which facilitates the 6-endo-tet cyclization to form the tetrahy-drofuran ring. Finally, ascofuranol is oxidized into ascofuranone by ascJ. The sequence is that of Non-canonical non-ribosomal peptide synthetase ascB from Acremonium egyptiacum (Oospora egyptiaca).